The sequence spans 181 residues: Acireductone dioxygenase (181 aa).

Positions 97, 99, 103, and 141 each coordinate Fe(2+). H97, H99, E103, and H141 together coordinate Ni(2+).

The protein belongs to the acireductone dioxygenase (ARD) family. As to quaternary structure, monomer. Requires Fe(2+) as cofactor. It depends on Ni(2+) as a cofactor.

The catalysed reaction is 1,2-dihydroxy-5-(methylsulfanyl)pent-1-en-3-one + O2 = 3-(methylsulfanyl)propanoate + CO + formate + 2 H(+). It catalyses the reaction 1,2-dihydroxy-5-(methylsulfanyl)pent-1-en-3-one + O2 = 4-methylsulfanyl-2-oxobutanoate + formate + 2 H(+). It participates in amino-acid biosynthesis; L-methionine biosynthesis via salvage pathway; L-methionine from S-methyl-5-thio-alpha-D-ribose 1-phosphate: step 5/6. Catalyzes 2 different reactions between oxygen and the acireductone 1,2-dihydroxy-3-keto-5-methylthiopentene (DHK-MTPene) depending upon the metal bound in the active site. Fe-containing acireductone dioxygenase (Fe-ARD) produces formate and 2-keto-4-methylthiobutyrate (KMTB), the alpha-ketoacid precursor of methionine in the methionine recycle pathway. Ni-containing acireductone dioxygenase (Ni-ARD) produces methylthiopropionate, carbon monoxide and formate, and does not lie on the methionine recycle pathway. This chain is Acireductone dioxygenase, found in Pseudomonas syringae pv. tomato (strain ATCC BAA-871 / DC3000).